Consider the following 518-residue polypeptide: Protein FAM98A (518 aa).

2 disordered regions span residues 300–415 (GRVP…GHSS) and 434–518 (GSGY…HYTS). The span at 302 to 311 (VPDRGGRPNE) shows a compositional bias: basic and acidic residues. Composition is skewed to gly residues over residues 349-364 (GGRGGHEQGGGRGGRG), 383-396 (WTDGGSGGGGGYQD), and 405-415 (QPGGYHGGHSS). The segment covering 447–459 (RYQDGGHHGDRGG) has biased composition (basic and acidic residues). Gly residues predominate over residues 460–484 (GRGGRGGRGGRGGRAGQGGGWGGRG). A compositionally biased stretch (low complexity) spans 488 to 504 (YHQGGQFEQHFQHGGYQ). Over residues 505-518 (YNHSGFGQGRHYTS) the composition is skewed to polar residues.

This sequence belongs to the FAM98 family. As to quaternary structure, interacts (via N- and C-terminus) with DDX1. Interacts (via N- and C-terminus) with C14orf166. Interacts with FAM98B. Interacts with PLEKHM1 (via N- and C-terminus).

In terms of biological role, positively stimulates PRMT1-induced protein arginine methylation. Involved in skeletal homeostasis. Positively regulates lysosome peripheral distribution and ruffled border formation in osteoclasts. This Pongo abelii (Sumatran orangutan) protein is Protein FAM98A.